A 77-amino-acid polypeptide reads, in one-letter code: U14-theraphotoxin-Cg1a 3 (77 aa).

An N-terminal signal peptide occupies residues 1–21 (MKTSVLLVILGIAAITVQCTA). Positions 22-49 (SESVEQDSLRTFVDTVLGWNAEMASEAR) are excised as a propeptide. 3 cysteine pairs are disulfide-bonded: Cys50–Cys64, Cys57–Cys69, and Cys63–Cys75. Lys77 is modified (lysine amide).

This sequence belongs to the neurotoxin 10 (Hwtx-1) family. 65 (Jztx-21) subfamily. As to expression, expressed by the venom gland.

It localises to the secreted. In terms of biological role, probable ion channel inhibitor. The polypeptide is U14-theraphotoxin-Cg1a 3 (Chilobrachys guangxiensis (Chinese earth tiger tarantula)).